Consider the following 335-residue polypeptide: tRNA pseudouridine synthase D (335 aa).

Asp77 (nucleophile) is an active-site residue. Residues 152 to 308 enclose the TRUD domain; sequence GFPNYFTEQR…AQNLNWQFEP (157 aa).

Belongs to the pseudouridine synthase TruD family.

It carries out the reaction uridine(13) in tRNA = pseudouridine(13) in tRNA. Its function is as follows. Responsible for synthesis of pseudouridine from uracil-13 in transfer RNAs. In Actinobacillus succinogenes (strain ATCC 55618 / DSM 22257 / CCUG 43843 / 130Z), this protein is tRNA pseudouridine synthase D.